Consider the following 147-residue polypeptide: MRDNTIGSLIWLRLIRFTNQSNQMSNEFLKRFDLTTAQFDVLLQIRTYQPLTQMELAEKVTVTQGGISRMLTRLEKEGYIVRKQDWKTKTISLTEQGEAALERALPEQLAFQSSFFDDVLNEEEQKILYELMTKVHKHSEKKELPKE.

The HTH marR-type domain maps to 1–137 (MRDNTIGSLI…LYELMTKVHK (137 aa)). A DNA-binding region (H-T-H motif) is located at residues 53–76 (QMELAEKVTVTQGGISRMLTRLEK).

This is an uncharacterized protein from Bacillus anthracis.